We begin with the raw amino-acid sequence, 97 residues long: MFKVKMIVSGRVQGVGFRYFVIISARELGILGRVWNNDDGTVEILAQTEDEKKLEEFTAIVRGEKSSKGRLSPFAKVTDVKSSPANFPDFTDFNIKY.

In terms of domain architecture, Acylphosphatase-like spans 3–97 (KVKMIVSGRV…PDFTDFNIKY (95 aa)). Residues Arg-18 and Asn-36 contribute to the active site.

The protein belongs to the acylphosphatase family.

The enzyme catalyses an acyl phosphate + H2O = a carboxylate + phosphate + H(+). This is Acylphosphatase (acyP) from Lactococcus lactis subsp. lactis (strain IL1403) (Streptococcus lactis).